Consider the following 454-residue polypeptide: Bifunctional protein GlmU (454 aa).

Residues 1 to 226 form a pyrophosphorylase region; the sequence is MSLNVVILAA…AIEVEGANNR (226 aa). UDP-N-acetyl-alpha-D-glucosamine is bound by residues 8 to 11, Lys22, Gln73, 78 to 79, 100 to 102, Gly137, Glu151, Asn166, and Asn224; these read LAAG, GT, and YGD. A Mg(2+)-binding site is contributed by Asp102. Mg(2+) is bound at residue Asn224. The linker stretch occupies residues 227–247; sequence VQLAQLERAYQARAAEKMMLE. Residues 248 to 454 form an N-acetyltransferase region; that stretch reads GANLRDPARI…GWQRPIKIKK (207 aa). UDP-N-acetyl-alpha-D-glucosamine contacts are provided by Arg330 and Lys348. His360 serves as the catalytic Proton acceptor. The UDP-N-acetyl-alpha-D-glucosamine site is built by Tyr363 and Asn374. Acetyl-CoA is bound by residues Ala377, 383-384, Ser402, Ala420, and Arg437; that span reads NY.

This sequence in the N-terminal section; belongs to the N-acetylglucosamine-1-phosphate uridyltransferase family. In the C-terminal section; belongs to the transferase hexapeptide repeat family. In terms of assembly, homotrimer. Mg(2+) serves as cofactor.

Its subcellular location is the cytoplasm. The catalysed reaction is alpha-D-glucosamine 1-phosphate + acetyl-CoA = N-acetyl-alpha-D-glucosamine 1-phosphate + CoA + H(+). It catalyses the reaction N-acetyl-alpha-D-glucosamine 1-phosphate + UTP + H(+) = UDP-N-acetyl-alpha-D-glucosamine + diphosphate. It participates in nucleotide-sugar biosynthesis; UDP-N-acetyl-alpha-D-glucosamine biosynthesis; N-acetyl-alpha-D-glucosamine 1-phosphate from alpha-D-glucosamine 6-phosphate (route II): step 2/2. Its pathway is nucleotide-sugar biosynthesis; UDP-N-acetyl-alpha-D-glucosamine biosynthesis; UDP-N-acetyl-alpha-D-glucosamine from N-acetyl-alpha-D-glucosamine 1-phosphate: step 1/1. It functions in the pathway bacterial outer membrane biogenesis; LPS lipid A biosynthesis. Its function is as follows. Catalyzes the last two sequential reactions in the de novo biosynthetic pathway for UDP-N-acetylglucosamine (UDP-GlcNAc). The C-terminal domain catalyzes the transfer of acetyl group from acetyl coenzyme A to glucosamine-1-phosphate (GlcN-1-P) to produce N-acetylglucosamine-1-phosphate (GlcNAc-1-P), which is converted into UDP-GlcNAc by the transfer of uridine 5-monophosphate (from uridine 5-triphosphate), a reaction catalyzed by the N-terminal domain. In Shewanella frigidimarina (strain NCIMB 400), this protein is Bifunctional protein GlmU.